The primary structure comprises 194 residues: Large ribosomal subunit protein eL15 (194 aa).

The tract at residues 164–194 is disordered; sequence AGRKARGLRRKGRGAEKVRPSLRANFRKKRR. The segment covering 166–175 has biased composition (basic residues); the sequence is RKARGLRRKG.

It belongs to the eukaryotic ribosomal protein eL15 family.

In Archaeoglobus fulgidus (strain ATCC 49558 / DSM 4304 / JCM 9628 / NBRC 100126 / VC-16), this protein is Large ribosomal subunit protein eL15 (rpl15e).